The following is a 145-amino-acid chain: Glutaconyl-CoA decarboxylase subunit gamma (145 aa).

Residues 52-82 (APAPAAAPAAAPAPAAKPAAAAPAGSVTVSA) are disordered. A compositionally biased stretch (low complexity) spans 57-75 (AAPAAAPAPAAKPAAAAPA). The Biotinyl-binding domain maps to 77 to 145 (SVTVSAPMPG…VATGDVMVIL (69 aa)). Lys-112 carries the N6-biotinyllysine modification.

As to quaternary structure, heterooctamer consisting of two alpha, two beta, two gamma and two delta subunits. Biotin serves as cofactor.

The enzyme catalyses (2E)-glutaconyl-CoA + Na(+)(in) + H(+) = (2E)-butenoyl-CoA + Na(+)(out) + CO2. It participates in amino-acid degradation; L-glutamate degradation via hydroxyglutarate pathway; crotonoyl-CoA from L-glutamate: step 5/5. Biotin carrier subunit of the primary sodium pump glutaconyl-CoA decarboxylase (GCD). The sequence is that of Glutaconyl-CoA decarboxylase subunit gamma (gcdC) from Acidaminococcus fermentans (strain ATCC 25085 / DSM 20731 / CCUG 9996 / CIP 106432 / VR4).